A 748-amino-acid polypeptide reads, in one-letter code: MAESKCPAHQHVLKANVGGAGTSNQDWWPDRLKLNILRQNNPVSNPLGEEFDYAAAFNSLDYFALKKDIQDLMTDSQDWWPADFGHYGGLFIRMAWHSAGTYRVADGRGGGGGGQQRFAPLNSWPDNVGLDKARRLLWPIKQKYGNKISWADLLLLTGNVALESMGFKTFGFSGGRADTWEVDESANWGGETTWLGNDVRYSGGKADHKDIHNRDLDKPLAAAHMGLIYVNPEGPDGNPDPIAAAKDIRTTFGRMAMNDEETVALIAGGHTFGKTHGAGPADKLGPEPEAADMAQQGLGWTNSFKSGKGPDTTTSGLEVTWTKTPTKWSNQFLEYLFRYDWELTKSPAGAHQWVAKNAEAFIPDAFDPSKKRKPMMLTTDLSLRYDPIYEKISRRFLEHPDQFADAFARAWFKLLHRDLGPRALYIGPEVPAEVLPWQDPVPAVDHPLISNEDASALKQRILASGVKPSSLISTAWASASTFRGSDKRGGANGARIRLSPQREWAVNNQPWLRETLSVLEAIQKQFNTSQSGGKKVSIADLIVLAGVAAVEKAARDAGYAVTVPFTPGRTDASQEQTDVQSFSDMEPIADGFRNYGSSTSRVRAEEWLIDKAQLLTLSAPELAVLIGGLRVLNTNYDGSAHGVFTQRPGKLTNDFFVNLLDMNTAWKSIGGVDLYEGTDRKTGAKKWTATRNDLVFGSNAELRAIAEVYGSSDGQEKFVKDFVAAWDKVMNLDRFDLKKKQSTSSHRL.

Residues 96-229 (WHSAGTYRVA…LAAAHMGLIY (134 aa)) constitute a cross-link (tryptophyl-tyrosyl-methioninium (Trp-Tyr) (with M-255)). His97 serves as the catalytic Proton acceptor. Residues 229-255 (YVNPEGPDGNPDPIAAAKDIRTTFGRM) constitute a cross-link (tryptophyl-tyrosyl-methioninium (Tyr-Met) (with W-96)). Residue His270 participates in heme b binding.

It belongs to the peroxidase family. Peroxidase/catalase subfamily. As to quaternary structure, homodimer or homotetramer. Requires heme b as cofactor. Post-translationally, formation of the three residue Trp-Tyr-Met cross-link is important for the catalase, but not the peroxidase activity of the enzyme.

The protein resides in the cytoplasm. It catalyses the reaction H2O2 + AH2 = A + 2 H2O. The catalysed reaction is 2 H2O2 = O2 + 2 H2O. Bifunctional enzyme with both catalase and broad-spectrum peroxidase activity. Plays a crucial role in oxidative stress response during infection. Acts as an antigen and elicits antibody response in P.marneffei-infected AIDS patients, healthy people working in mycological laboratory, and healthy people in an endemic area. The polypeptide is Catalase-peroxidase (Talaromyces marneffei (Penicillium marneffei)).